Consider the following 337-residue polypeptide: Tetraacyldisaccharide 4'-kinase (337 aa).

ATP is bound at residue 51-58 (HLGGAGKT).

It belongs to the LpxK family.

The enzyme catalyses a lipid A disaccharide + ATP = a lipid IVA + ADP + H(+). It functions in the pathway glycolipid biosynthesis; lipid IV(A) biosynthesis; lipid IV(A) from (3R)-3-hydroxytetradecanoyl-[acyl-carrier-protein] and UDP-N-acetyl-alpha-D-glucosamine: step 6/6. Its function is as follows. Transfers the gamma-phosphate of ATP to the 4'-position of a tetraacyldisaccharide 1-phosphate intermediate (termed DS-1-P) to form tetraacyldisaccharide 1,4'-bis-phosphate (lipid IVA). The sequence is that of Tetraacyldisaccharide 4'-kinase from Nitrobacter winogradskyi (strain ATCC 25391 / DSM 10237 / CIP 104748 / NCIMB 11846 / Nb-255).